Here is a 68-residue protein sequence, read N- to C-terminus: Disintegrin EMS11A (68 aa).

Residues 1–65 form the Disintegrin domain; sequence NSAHPCCDPV…DCPRNRYKGK (65 aa). 4 disulfides stabilise this stretch: Cys-6-Cys-29, Cys-20-Cys-26, Cys-25-Cys-50, and Cys-38-Cys-57. A Cell attachment site; atypical (MLD) motif is present at residues 42 to 44; sequence MLD.

Belongs to the disintegrin family. Dimeric disintegrin subfamily. In terms of assembly, heterodimer; disulfide-linked. As to expression, expressed by the venom gland.

The protein localises to the secreted. Poor inhibitor of platelet aggregation. The disintegrin inhibits the adhesion of both the alpha-4/beta-1 (ITGA4/ITGB1) and the alpha-5/beta-1 (ITGA5/ITGB1) integrins to VCAM-1 and fibronectin respectively with almost the same degree of specificity. Inhibition on alpha-IIb/beta-3 (ITGA2B/ITGB3) is low. The sequence is that of Disintegrin EMS11A from Echis multisquamatus (Central Asian sand viper).